Here is a 730-residue protein sequence, read N- to C-terminus: Ribosomal RNA large subunit methyltransferase K/L (730 aa).

The THUMP domain occupies 46–157; sequence TAYRLCVWSR…RGEAILSLDL (112 aa). Positions 394-418 are disordered; the sequence is GERREAQPEGTEARQQVPQASEPAR.

It belongs to the methyltransferase superfamily. RlmKL family.

The protein resides in the cytoplasm. It catalyses the reaction guanosine(2445) in 23S rRNA + S-adenosyl-L-methionine = N(2)-methylguanosine(2445) in 23S rRNA + S-adenosyl-L-homocysteine + H(+). It carries out the reaction guanosine(2069) in 23S rRNA + S-adenosyl-L-methionine = N(2)-methylguanosine(2069) in 23S rRNA + S-adenosyl-L-homocysteine + H(+). Specifically methylates the guanine in position 2445 (m2G2445) and the guanine in position 2069 (m7G2069) of 23S rRNA. The protein is Ribosomal RNA large subunit methyltransferase K/L of Pseudomonas putida (strain ATCC 47054 / DSM 6125 / CFBP 8728 / NCIMB 11950 / KT2440).